We begin with the raw amino-acid sequence, 203 residues long: Putative 3-methyladenine DNA glycosylase (203 aa).

Belongs to the DNA glycosylase MPG family.

The sequence is that of Putative 3-methyladenine DNA glycosylase from Clostridium beijerinckii (strain ATCC 51743 / NCIMB 8052) (Clostridium acetobutylicum).